We begin with the raw amino-acid sequence, 134 residues long: Interleukin-5 (134 aa).

The first 19 residues, 1-19 (MRMLLHLSLLALGAAYVSA), serve as a signal peptide directing secretion. N-linked (GlcNAc...) asparagine glycans are attached at residues Asn-76 and Asn-90.

It belongs to the IL-5 family. Homodimer; disulfide-linked. Interacts with IL5RA. Interacts with CSF2RB.

The protein resides in the secreted. Homodimeric cytokine expressed predominantly by T-lymphocytes and NK cells that plays an important role in the survival, differentiation, and chemotaxis of eosinophils. Also acts on activated and resting B-cells to induce immunoglobulin production, growth, and differentiation. Mechanistically, exerts its biological effects through a receptor composed of IL5RA subunit and the cytokine receptor common subunit beta/CSF2RB. Binding to the receptor leads to activation of various kinases including LYN, SYK and JAK2 and thereby propagates signals through the RAS-MAPK and JAK-STAT5 pathways respectively. The sequence is that of Interleukin-5 (IL5) from Felis catus (Cat).